The chain runs to 366 residues: Autophagy-related protein 18b (366 aa).

WD repeat units lie at residues S6–E44, A178–S218, and T223–S265.

The protein belongs to the WD repeat PROPPIN family. In terms of assembly, component of the PI(3,5)P2 regulatory complex at least composed of ATG18, SAC/FIG4, FAB1 and VAC14. Expressed in roots, stems, flowers and leaves.

Its subcellular location is the preautophagosomal structure membrane. The protein resides in the vacuole membrane. In terms of biological role, the PI(3,5)P2 regulatory complex regulates both the synthesis and turnover of phosphatidylinositol 3,5-bisphosphate (PtdIns(3,5)P2). Required for autophagy. The sequence is that of Autophagy-related protein 18b (ATG18B) from Arabidopsis thaliana (Mouse-ear cress).